Reading from the N-terminus, the 371-residue chain is Forkhead box protein J1.2 (371 aa).

Disordered regions lie at residues alanine 45–threonine 74 and valine 80–glutamate 99. A DNA-binding region (fork-head) is located at residues lysine 109–methionine 203. A disordered region spans residues proline 228–lysine 248.

The protein belongs to the FOXJ1 family. In terms of tissue distribution, expressed diffusely through much of gastrula and neurula stage embryos. At stage 23 (late neurula), limited to the otic vesicle. By stage 28 (tailbud), also expressed transiently in the presumptive nephrostomes of the pronephros. At stage 35 (early tadpole), expressed broadly in the head and strongly expressed in the developing gill structures.

The protein resides in the nucleus. Key transcription factor required for motile ciliogenesis. Activates genes essential for motile cilia formation and function. This Xenopus tropicalis (Western clawed frog) protein is Forkhead box protein J1.2.